Reading from the N-terminus, the 148-residue chain is Ribonuclease H (148 aa).

One can recognise an RNase H type-1 domain in the interval methionine 1–aspartate 142. Residues aspartate 10, glutamate 48, aspartate 70, and aspartate 134 each coordinate Mg(2+). Positions glycine 129–arginine 148 are disordered.

Belongs to the RNase H family. In terms of assembly, monomer. It depends on Mg(2+) as a cofactor.

The protein localises to the cytoplasm. It carries out the reaction Endonucleolytic cleavage to 5'-phosphomonoester.. Its function is as follows. Endonuclease that specifically degrades the RNA of RNA-DNA hybrids. This chain is Ribonuclease H, found in Pseudomonas putida (strain W619).